The following is a 351-amino-acid chain: Dihydroorotate dehydrogenase (quinone) (351 aa).

FMN is bound by residues 61–65 (AGLDK) and Thr-85. Lys-65 contributes to the substrate binding site. 110–114 (NRMGF) contacts substrate. Residues Asn-139 and Asn-172 each coordinate FMN. Asn-172 serves as a coordination point for substrate. The active-site Nucleophile is the Ser-175. Asn-177 serves as a coordination point for substrate. Residues Lys-217 and Thr-245 each coordinate FMN. 246–247 (NT) is a binding site for substrate. FMN is bound by residues Gly-268, Gly-297, and 318 to 319 (YT).

This sequence belongs to the dihydroorotate dehydrogenase family. Type 2 subfamily. Monomer. It depends on FMN as a cofactor.

It localises to the cell membrane. The enzyme catalyses (S)-dihydroorotate + a quinone = orotate + a quinol. Its pathway is pyrimidine metabolism; UMP biosynthesis via de novo pathway; orotate from (S)-dihydroorotate (quinone route): step 1/1. Its function is as follows. Catalyzes the conversion of dihydroorotate to orotate with quinone as electron acceptor. The sequence is that of Dihydroorotate dehydrogenase (quinone) from Xylella fastidiosa (strain M12).